Consider the following 180-residue polypeptide: Large ribosomal subunit protein uL5c (180 aa).

The protein belongs to the universal ribosomal protein uL5 family. As to quaternary structure, part of the 50S ribosomal subunit; contacts the 5S rRNA.

It localises to the plastid. It is found in the chloroplast. Its function is as follows. Binds 5S rRNA, forms part of the central protuberance of the 50S subunit. This chain is Large ribosomal subunit protein uL5c (rpl5), found in Oedogonium cardiacum (Filamentous green alga).